The sequence spans 118 residues: DNA-directed RNA polymerase subunit omega (118 aa).

This sequence belongs to the RNA polymerase subunit omega family. In terms of assembly, the RNAP catalytic core consists of 2 alpha, 1 beta, 1 beta' and 1 omega subunit. When a sigma factor is associated with the core the holoenzyme is formed, which can initiate transcription.

The catalysed reaction is RNA(n) + a ribonucleoside 5'-triphosphate = RNA(n+1) + diphosphate. Its function is as follows. Promotes RNA polymerase assembly. Latches the N- and C-terminal regions of the beta' subunit thereby facilitating its interaction with the beta and alpha subunits. This is DNA-directed RNA polymerase subunit omega from Paracoccus denitrificans (strain Pd 1222).